Reading from the N-terminus, the 334-residue chain is Ketol-acid reductoisomerase (NADP(+)) (334 aa).

The 180-residue stretch at 2 to 181 folds into the KARI N-terminal Rossmann domain; the sequence is TKVYYDETVT…GATRAGVIET (180 aa). Residues 25–28, Arg-48, Ser-52, and 82–85 contribute to the NADP(+) site; these read YGSQ and DEIQ. Residue His-107 is part of the active site. Gly-133 lines the NADP(+) pocket. The 146-residue stretch at 182–327 folds into the KARI C-terminal knotted domain; that stretch reads TFKEETETDL…RELREMMPFI (146 aa). Mg(2+) contacts are provided by Asp-190, Glu-194, Glu-226, and Glu-230. Ser-251 contributes to the substrate binding site.

The protein belongs to the ketol-acid reductoisomerase family. Mg(2+) is required as a cofactor.

It catalyses the reaction (2R)-2,3-dihydroxy-3-methylbutanoate + NADP(+) = (2S)-2-acetolactate + NADPH + H(+). It carries out the reaction (2R,3R)-2,3-dihydroxy-3-methylpentanoate + NADP(+) = (S)-2-ethyl-2-hydroxy-3-oxobutanoate + NADPH + H(+). Its pathway is amino-acid biosynthesis; L-isoleucine biosynthesis; L-isoleucine from 2-oxobutanoate: step 2/4. The protein operates within amino-acid biosynthesis; L-valine biosynthesis; L-valine from pyruvate: step 2/4. Involved in the biosynthesis of branched-chain amino acids (BCAA). Catalyzes an alkyl-migration followed by a ketol-acid reduction of (S)-2-acetolactate (S2AL) to yield (R)-2,3-dihydroxy-isovalerate. In the isomerase reaction, S2AL is rearranged via a Mg-dependent methyl migration to produce 3-hydroxy-3-methyl-2-ketobutyrate (HMKB). In the reductase reaction, this 2-ketoacid undergoes a metal-dependent reduction by NADPH to yield (R)-2,3-dihydroxy-isovalerate. This chain is Ketol-acid reductoisomerase (NADP(+)), found in Staphylococcus epidermidis (strain ATCC 35984 / DSM 28319 / BCRC 17069 / CCUG 31568 / BM 3577 / RP62A).